The following is an 83-amino-acid chain: Small ribosomal subunit protein eS21 (83 aa).

This sequence belongs to the eukaryotic ribosomal protein eS21 family. As to quaternary structure, component of the 40S small ribosomal subunit. Interacts with sta.

The protein localises to the cytoplasm. It is found in the cytosol. It localises to the rough endoplasmic reticulum. In terms of biological role, may be an associated component of the ribosome rather than a core structural subunit. May act as a translation initiation factor. Has a role in regulation of cell proliferation in the hematopoietic organs and the imaginal disks of larva. The polypeptide is Small ribosomal subunit protein eS21 (RpS21) (Drosophila simulans (Fruit fly)).